We begin with the raw amino-acid sequence, 270 residues long: Glyoxylate pathway regulator (270 aa).

Residues 1–33 (MNTEIPDLEKQQIDHNSGSDDPQPIHDDMAPVS) form a disordered region. Y58 carries the phosphotyrosine modification. Residue S74 is modified to Phosphoserine. 6 consecutive transmembrane segments (helical) span residues 80–100 (PAPL…LCTV), 109–129 (SIAV…AGMW), 137–157 (FGAA…AIEM), 175–195 (AVGI…LCTL), 198–218 (TVAF…LACA), and 227–247 (AIGG…NAYA).

It belongs to the acetate uptake transporter (AceTr) (TC 2.A.96) family.

Its subcellular location is the membrane. Plays a role in the adaptation of cell metabolism to the utilization of acetic acid, possibly by inhibiting an anion-transporting ATPase and affecting the plasma membrane H(+)-ATPase. May be indirectly involved in the repression of genes encoding glyoxylate cycle enzymes. The polypeptide is Glyoxylate pathway regulator (GPR1) (Yarrowia lipolytica (strain CLIB 122 / E 150) (Yeast)).